A 186-amino-acid chain; its full sequence is Probable RNA 2'-phosphotransferase (186 aa).

This sequence belongs to the KptA/TPT1 family.

Removes the 2'-phosphate from RNA via an intermediate in which the phosphate is ADP-ribosylated by NAD followed by a presumed transesterification to release the RNA and generate ADP-ribose 1''-2''-cyclic phosphate (APPR&gt;P). May function as an ADP-ribosylase. The sequence is that of Probable RNA 2'-phosphotransferase from Pectobacterium carotovorum subsp. carotovorum (strain PC1).